A 186-amino-acid polypeptide reads, in one-letter code: Probable nicotinate-nucleotide adenylyltransferase (186 aa).

Belongs to the NadD family.

It carries out the reaction nicotinate beta-D-ribonucleotide + ATP + H(+) = deamido-NAD(+) + diphosphate. Its pathway is cofactor biosynthesis; NAD(+) biosynthesis; deamido-NAD(+) from nicotinate D-ribonucleotide: step 1/1. In terms of biological role, catalyzes the reversible adenylation of nicotinate mononucleotide (NaMN) to nicotinic acid adenine dinucleotide (NaAD). The protein is Probable nicotinate-nucleotide adenylyltransferase of Tropheryma whipplei (strain TW08/27) (Whipple's bacillus).